Here is a 532-residue protein sequence, read N- to C-terminus: 2,3-bisphosphoglycerate-independent phosphoglycerate mutase (532 aa).

2 residues coordinate Mn(2+): Asp15 and Ser65. Ser65 serves as the catalytic Phosphoserine intermediate. Substrate is bound by residues His126, 156–157, Arg188, Arg194, 258–261, and Lys331; these read RD and RPDR. Asp398, His402, Asp439, His440, and His457 together coordinate Mn(2+).

The protein belongs to the BPG-independent phosphoglycerate mutase family. In terms of assembly, monomer. The cofactor is Mn(2+).

The catalysed reaction is (2R)-2-phosphoglycerate = (2R)-3-phosphoglycerate. Its pathway is carbohydrate degradation; glycolysis; pyruvate from D-glyceraldehyde 3-phosphate: step 3/5. Functionally, catalyzes the interconversion of 2-phosphoglycerate and 3-phosphoglycerate. The protein is 2,3-bisphosphoglycerate-independent phosphoglycerate mutase of Synechocystis sp. (strain ATCC 27184 / PCC 6803 / Kazusa).